Reading from the N-terminus, the 33-residue chain is Cytochrome b6-f complex subunit 6 (33 aa).

Residues 4–24 (ITIISYFGFLLASIIFTLVLF) traverse the membrane as a helical segment.

This sequence belongs to the PetL family. The 4 large subunits of the cytochrome b6-f complex are cytochrome b6, subunit IV (17 kDa polypeptide, PetD), cytochrome f and the Rieske protein, while the 4 small subunits are PetG, PetL, PetM and PetN. The complex functions as a dimer.

It localises to the plastid. Its subcellular location is the chloroplast thylakoid membrane. Its function is as follows. Component of the cytochrome b6-f complex, which mediates electron transfer between photosystem II (PSII) and photosystem I (PSI), cyclic electron flow around PSI, and state transitions. PetL is important for photoautotrophic growth as well as for electron transfer efficiency and stability of the cytochrome b6-f complex. The chain is Cytochrome b6-f complex subunit 6 from Pinus thunbergii (Japanese black pine).